The following is a 556-amino-acid chain: PPE family protein PPE2 (556 aa).

Residues 8 to 164 are PPE; that stretch reads ASPPEVHSAL…ASYQAVSTAA (157 aa). Residues 201 to 256 are SH3-like; it reads QKIGYTDFYNNVIQPFINWLTNLPFLQAMFSGFDPWLPSLGNPLTFLSPANIAFAL. The segment at 319–340 is leucine zipper motif; the sequence is LEQTLALLPAALPLLAAPLAPL. 2 disordered regions span residues 385 to 418 and 443 to 556; these read TPTP…PPVT and GTGV…TRVE. Residues 400-417 are compositionally biased toward pro residues; sequence PTPPLGPPPPPVTAPPPV. Residues 456–471 are compositionally biased toward low complexity; the sequence is AEAPASAAAPEEQVQP. The segment covering 472-481 has biased composition (basic residues); sequence QRRRRPKIKQ. The Nuclear localization signal signature appears at 473-481; the sequence is RRRRPKIKQ.

The protein belongs to the mycobacterial PPE family.

The protein resides in the secreted. The protein localises to the host cytoplasm. Its subcellular location is the host nucleus. Functionally, inhibits nitric oxide (NO) production in activated macrophages. Acts by inhibiting expression of the host inducible nitric oxide synthase (iNOS). PPE2 is translocated into the host macrophage nucleus, where it interacts with a GATA-binding site overlapping with the TATA box of NOS2 (iNOS) promoter, and strongly inhibits NOS2 gene transcription. Reduction in NO production in turn facilitates intracellular survival of the bacilli inside the macrophage. In addition, disrupts the assembly of NADPH oxidase complex, which inhibits NADPH oxidase-mediated reactive oxygen species (ROS) generation in macrophages and favors M.tuberculosis survival. Acts by interacting with NCF2, the cytosolic subunit of NADPH oxidase, and preventing translocation of NCF2 and NCF1 to the membrane, which causes a reduction of the functional assembly of NADPH oxidase complex and a decrease in NADPH oxidase activity. The sequence is that of PPE family protein PPE2 (PPE2) from Mycobacterium tuberculosis (strain CDC 1551 / Oshkosh).